The chain runs to 374 residues: uncharacterized protein (374 aa).

This is an uncharacterized protein from Methanocaldococcus jannaschii (strain ATCC 43067 / DSM 2661 / JAL-1 / JCM 10045 / NBRC 100440) (Methanococcus jannaschii).